Consider the following 20-residue polypeptide: Fibrinogen beta chain (20 aa).

The span at 1–12 (IIDYYDEGEEDR) shows a compositional bias: acidic residues. The interval 1–20 (IIDYYDEGEEDRDVGVVDAR) is disordered.

Heterohexamer; disulfide linked. Contains 2 sets of 3 non-identical chains (alpha, beta and gamma). The 2 heterotrimers are in head to head conformation with the N-termini in a small central domain. Post-translationally, conversion of fibrinogen to fibrin is triggered by thrombin, which cleaves fibrinopeptides A and B from alpha and beta chains, and thus exposes the N-terminal polymerization sites responsible for the formation of the soft clot.

It is found in the secreted. Functionally, cleaved by the protease thrombin to yield monomers which, together with fibrinogen alpha (FGA) and fibrinogen gamma (FGG), polymerize to form an insoluble fibrin matrix. Fibrin has a major function in hemostasis as one of the primary components of blood clots. In addition, functions during the early stages of wound repair to stabilize the lesion and guide cell migration during re-epithelialization. Was originally thought to be essential for platelet aggregation, based on in vitro studies using anticoagulated blood. However subsequent studies have shown that it is not absolutely required for thrombus formation in vivo. Enhances expression of SELP in activated platelets. Maternal fibrinogen is essential for successful pregnancy. Fibrin deposition is also associated with infection, where it protects against IFNG-mediated hemorrhage. May also facilitate the antibacterial immune response via both innate and T-cell mediated pathways. The sequence is that of Fibrinogen beta chain (FGB) from Felis catus (Cat).